A 261-amino-acid chain; its full sequence is Methyl-coenzyme M reductase subunit gamma (261 aa).

Arg123 serves as a coordination point for coenzyme M.

The protein belongs to the methyl-coenzyme M reductase gamma subunit family. As to quaternary structure, MCR is a hexamer of two alpha, two beta, and two gamma chains, forming a dimer of heterotrimers. It depends on coenzyme F430 as a cofactor.

It is found in the cytoplasm. It catalyses the reaction coenzyme B + methyl-coenzyme M = methane + coenzyme M-coenzyme B heterodisulfide. Its pathway is one-carbon metabolism; methyl-coenzyme M reduction; methane from methyl-coenzyme M: step 1/1. Its function is as follows. Component of the methyl-coenzyme M reductase (MCR) I that catalyzes the reductive cleavage of methyl-coenzyme M (CoM-S-CH3 or 2-(methylthio)ethanesulfonate) using coenzyme B (CoB or 7-mercaptoheptanoylthreonine phosphate) as reductant which results in the production of methane and the mixed heterodisulfide of CoB and CoM (CoM-S-S-CoB). This is the final step in methanogenesis. The protein is Methyl-coenzyme M reductase subunit gamma (mcrG) of Methanococcus voltae.